We begin with the raw amino-acid sequence, 227 residues long: UPF0173 metal-dependent hydrolase BT9727_4343 (227 aa).

It belongs to the UPF0173 family.

The chain is UPF0173 metal-dependent hydrolase BT9727_4343 from Bacillus thuringiensis subsp. konkukian (strain 97-27).